The sequence spans 340 residues: Toxin coregulated pilus biosynthesis protein E (340 aa).

Helical transmembrane passes span 108–131, 146–161, and 312–333; these read AISSMITPSVMLIVTMVVIAGYSV, WPGVTQALYNLGFSLY, and NISLITLALSVIWIFGAIFSLV.

This sequence belongs to the GSP F family.

The protein resides in the cell inner membrane. In terms of biological role, probably involved in cholera toxin receptor (GM1) interaction in order to bring the cells within close proximity of the ganglioside for efficient toxin delivery. In Vibrio cholerae serotype O1 (strain ATCC 39315 / El Tor Inaba N16961), this protein is Toxin coregulated pilus biosynthesis protein E (tcpE).